The primary structure comprises 479 residues: Aspartyl/glutamyl-tRNA(Asn/Gln) amidotransferase subunit B (479 aa).

It belongs to the GatB/GatE family. GatB subfamily. Heterotrimer of A, B and C subunits.

It carries out the reaction L-glutamyl-tRNA(Gln) + L-glutamine + ATP + H2O = L-glutaminyl-tRNA(Gln) + L-glutamate + ADP + phosphate + H(+). It catalyses the reaction L-aspartyl-tRNA(Asn) + L-glutamine + ATP + H2O = L-asparaginyl-tRNA(Asn) + L-glutamate + ADP + phosphate + 2 H(+). Functionally, allows the formation of correctly charged Asn-tRNA(Asn) or Gln-tRNA(Gln) through the transamidation of misacylated Asp-tRNA(Asn) or Glu-tRNA(Gln) in organisms which lack either or both of asparaginyl-tRNA or glutaminyl-tRNA synthetases. The reaction takes place in the presence of glutamine and ATP through an activated phospho-Asp-tRNA(Asn) or phospho-Glu-tRNA(Gln). This chain is Aspartyl/glutamyl-tRNA(Asn/Gln) amidotransferase subunit B, found in Mesoplasma florum (strain ATCC 33453 / NBRC 100688 / NCTC 11704 / L1) (Acholeplasma florum).